The primary structure comprises 107 residues: NADH dehydrogenase [ubiquinone] 1 beta subcomplex subunit 10-A (107 aa).

Residues methionine 1 to proline 23 are disordered.

This sequence belongs to the complex I NDUFB10 subunit family. Complex I is composed of at least 49 different subunits.

It is found in the mitochondrion inner membrane. Functionally, accessory subunit of the mitochondrial membrane respiratory chain NADH dehydrogenase (Complex I), that is believed not to be involved in catalysis. Complex I functions in the transfer of electrons from NADH to the respiratory chain. The immediate electron acceptor for the enzyme is believed to be ubiquinone. This chain is NADH dehydrogenase [ubiquinone] 1 beta subcomplex subunit 10-A, found in Arabidopsis thaliana (Mouse-ear cress).